The sequence spans 338 residues: Uroporphyrinogen decarboxylase (338 aa).

Substrate is bound by residues 23–27, Asp-72, Tyr-146, Thr-201, and His-312; that span reads RQAGR.

Belongs to the uroporphyrinogen decarboxylase family. As to quaternary structure, homodimer.

It is found in the cytoplasm. It carries out the reaction uroporphyrinogen III + 4 H(+) = coproporphyrinogen III + 4 CO2. It functions in the pathway porphyrin-containing compound metabolism; protoporphyrin-IX biosynthesis; coproporphyrinogen-III from 5-aminolevulinate: step 4/4. Functionally, catalyzes the decarboxylation of four acetate groups of uroporphyrinogen-III to yield coproporphyrinogen-III. In Thermodesulfovibrio yellowstonii (strain ATCC 51303 / DSM 11347 / YP87), this protein is Uroporphyrinogen decarboxylase.